The following is a 205-amino-acid chain: Holliday junction branch migration complex subunit RuvA (205 aa).

The segment at 1–62 (MFEYVTGYVE…EDIMALYGFK (62 aa)) is domain I. The interval 63–141 (TREERLLFTK…DVVPDAFVDL (79 aa)) is domain II. The flexible linker stretch occupies residues 142–152 (FSDTERFDEKK). The segment at 153–205 (GSSAELDEALEALRALGYAEREVSRVVPELLKESLTTDQYIKKALSLLLNGKR) is domain III.

It belongs to the RuvA family. As to quaternary structure, homotetramer. Forms an RuvA(8)-RuvB(12)-Holliday junction (HJ) complex. HJ DNA is sandwiched between 2 RuvA tetramers; dsDNA enters through RuvA and exits via RuvB. An RuvB hexamer assembles on each DNA strand where it exits the tetramer. Each RuvB hexamer is contacted by two RuvA subunits (via domain III) on 2 adjacent RuvB subunits; this complex drives branch migration. In the full resolvosome a probable DNA-RuvA(4)-RuvB(12)-RuvC(2) complex forms which resolves the HJ.

The protein resides in the cytoplasm. In terms of biological role, the RuvA-RuvB-RuvC complex processes Holliday junction (HJ) DNA during genetic recombination and DNA repair, while the RuvA-RuvB complex plays an important role in the rescue of blocked DNA replication forks via replication fork reversal (RFR). RuvA specifically binds to HJ cruciform DNA, conferring on it an open structure. The RuvB hexamer acts as an ATP-dependent pump, pulling dsDNA into and through the RuvAB complex. HJ branch migration allows RuvC to scan DNA until it finds its consensus sequence, where it cleaves and resolves the cruciform DNA. This is Holliday junction branch migration complex subunit RuvA from Bacillus cereus (strain ATCC 14579 / DSM 31 / CCUG 7414 / JCM 2152 / NBRC 15305 / NCIMB 9373 / NCTC 2599 / NRRL B-3711).